A 157-amino-acid polypeptide reads, in one-letter code: Large ribosomal subunit protein bL20 (157 aa).

The tract at residues 121-157 (TSAPAVSAEAAPKAKAAKKPAAKKAAAKKPVAEEAAK) is disordered. Residues 122–134 (SAPAVSAEAAPKA) show a composition bias toward low complexity. Over residues 135-147 (KAAKKPAAKKAAA) the composition is skewed to basic residues.

This sequence belongs to the bacterial ribosomal protein bL20 family.

In terms of biological role, binds directly to 23S ribosomal RNA and is necessary for the in vitro assembly process of the 50S ribosomal subunit. It is not involved in the protein synthesizing functions of that subunit. In Arthrobacter sp. (strain FB24), this protein is Large ribosomal subunit protein bL20 (rplT).